A 198-amino-acid chain; its full sequence is dCTP deaminase (198 aa).

DCTP is bound by residues 110–115 (RSSLAR), aspartate 128, 136–138 (VLE), tyrosine 171, lysine 178, and glutamine 182. Residue glutamate 138 is the Proton donor/acceptor of the active site. Positions 168–198 (ARPYNKREDAKYRDQKGAVASRISQDEKVNK) are disordered. Residues 172-183 (NKREDAKYRDQK) are compositionally biased toward basic and acidic residues.

Belongs to the dCTP deaminase family. In terms of assembly, homotrimer.

It carries out the reaction dCTP + H2O + H(+) = dUTP + NH4(+). It functions in the pathway pyrimidine metabolism; dUMP biosynthesis; dUMP from dCTP (dUTP route): step 1/2. In terms of biological role, catalyzes the deamination of dCTP to dUTP. This Colwellia psychrerythraea (strain 34H / ATCC BAA-681) (Vibrio psychroerythus) protein is dCTP deaminase.